Here is a 62-residue protein sequence, read N- to C-terminus: Large ribosomal subunit protein bL28 (62 aa).

Belongs to the bacterial ribosomal protein bL28 family.

This Helicobacter pylori (strain P12) protein is Large ribosomal subunit protein bL28.